The chain runs to 284 residues: Tryptophan 2,3-dioxygenase (284 aa).

Substrate contacts are provided by residues 53–57 (FIVQH), tyrosine 115, and arginine 119. A heme-binding site is contributed by histidine 242. Threonine 256 provides a ligand contact to substrate.

Belongs to the tryptophan 2,3-dioxygenase family. As to quaternary structure, homotetramer. Requires heme as cofactor.

The catalysed reaction is L-tryptophan + O2 = N-formyl-L-kynurenine. Its pathway is amino-acid degradation; L-tryptophan degradation via kynurenine pathway; L-kynurenine from L-tryptophan: step 1/2. Functionally, heme-dependent dioxygenase that catalyzes the oxidative cleavage of the L-tryptophan (L-Trp) pyrrole ring and converts L-tryptophan to N-formyl-L-kynurenine. Catalyzes the oxidative cleavage of the indole moiety. This Bordetella pertussis (strain Tohama I / ATCC BAA-589 / NCTC 13251) protein is Tryptophan 2,3-dioxygenase.